Reading from the N-terminus, the 261-residue chain is Glucose 1-dehydrogenase 3 (261 aa).

NAD(+) is bound at residue 11-35 (VITGGSTGLGRAMAVRFGQEEAKVV). Ser-145 is a binding site for substrate. The Proton acceptor role is filled by Tyr-158.

The protein belongs to the short-chain dehydrogenases/reductases (SDR) family. In terms of assembly, homotetramer.

The enzyme catalyses D-glucose + NAD(+) = D-glucono-1,5-lactone + NADH + H(+). It catalyses the reaction D-glucose + NADP(+) = D-glucono-1,5-lactone + NADPH + H(+). The polypeptide is Glucose 1-dehydrogenase 3 (gdhIII) (Priestia megaterium (Bacillus megaterium)).